Here is a 329-residue protein sequence, read N- to C-terminus: Acetyl-coenzyme A carboxylase carboxyl transferase subunit alpha (329 aa).

The CoA carboxyltransferase C-terminal domain occupies 40 to 294 (QLETLAARRR…REAIERHLDD (255 aa)).

Belongs to the AccA family. As to quaternary structure, acetyl-CoA carboxylase is a heterohexamer composed of biotin carboxyl carrier protein (AccB), biotin carboxylase (AccC) and two subunits each of ACCase subunit alpha (AccA) and ACCase subunit beta (AccD).

The protein localises to the cytoplasm. The enzyme catalyses N(6)-carboxybiotinyl-L-lysyl-[protein] + acetyl-CoA = N(6)-biotinyl-L-lysyl-[protein] + malonyl-CoA. The protein operates within lipid metabolism; malonyl-CoA biosynthesis; malonyl-CoA from acetyl-CoA: step 1/1. In terms of biological role, component of the acetyl coenzyme A carboxylase (ACC) complex. First, biotin carboxylase catalyzes the carboxylation of biotin on its carrier protein (BCCP) and then the CO(2) group is transferred by the carboxyltransferase to acetyl-CoA to form malonyl-CoA. In Prochlorococcus marinus (strain MIT 9303), this protein is Acetyl-coenzyme A carboxylase carboxyl transferase subunit alpha.